The following is a 325-amino-acid chain: Phosphate acyltransferase (325 aa).

Belongs to the PlsX family. As to quaternary structure, homodimer. Probably interacts with PlsY.

The protein resides in the cytoplasm. The enzyme catalyses a fatty acyl-[ACP] + phosphate = an acyl phosphate + holo-[ACP]. It participates in lipid metabolism; phospholipid metabolism. In terms of biological role, catalyzes the reversible formation of acyl-phosphate (acyl-PO(4)) from acyl-[acyl-carrier-protein] (acyl-ACP). This enzyme utilizes acyl-ACP as fatty acyl donor, but not acyl-CoA. This chain is Phosphate acyltransferase, found in Staphylococcus epidermidis (strain ATCC 12228 / FDA PCI 1200).